The following is a 233-amino-acid chain: Segregation and condensation protein A (233 aa).

It belongs to the ScpA family. In terms of assembly, component of a cohesin-like complex composed of ScpA, ScpB and the Smc homodimer, in which ScpA and ScpB bind to the head domain of Smc. The presence of the three proteins is required for the association of the complex with DNA.

The protein localises to the cytoplasm. Participates in chromosomal partition during cell division. May act via the formation of a condensin-like complex containing Smc and ScpB that pull DNA away from mid-cell into both cell halves. This is Segregation and condensation protein A from Streptococcus pyogenes serotype M1.